Consider the following 547-residue polypeptide: Putative HMP/thiamine import ATP-binding protein YkoD (547 aa).

2 consecutive ABC transporter domains span residues 8 to 250 (LTVE…KLGI) and 295 to 523 (LEVS…KAKL). Residues 42-49 (GPSGCGKS) and 327-334 (GPNGTGKS) contribute to the ATP site.

It belongs to the ABC transporter superfamily. In terms of assembly, the complex is composed of two ATP-binding proteins (YkoD), two transmembrane proteins (YkoC and YkoE) and a solute-binding protein (YkoF).

Its subcellular location is the cell membrane. Part of the ABC transporter complex YkoCDEF that could transport hydroxymethylpyrimidine (HMP) and/or thiamine. Could also transport other HMP-containing products. Responsible for energy coupling to the transport system. This Bacillus subtilis (strain 168) protein is Putative HMP/thiamine import ATP-binding protein YkoD (ykoD).